The following is a 504-amino-acid chain: Probable cytosol aminopeptidase (504 aa).

The Mn(2+) site is built by Lys274 and Asp279. Lys286 is an active-site residue. Mn(2+) contacts are provided by Asp297, Asp356, and Glu358. The active site involves Arg360.

Belongs to the peptidase M17 family. Mn(2+) serves as cofactor.

The protein resides in the cytoplasm. The catalysed reaction is Release of an N-terminal amino acid, Xaa-|-Yaa-, in which Xaa is preferably Leu, but may be other amino acids including Pro although not Arg or Lys, and Yaa may be Pro. Amino acid amides and methyl esters are also readily hydrolyzed, but rates on arylamides are exceedingly low.. It carries out the reaction Release of an N-terminal amino acid, preferentially leucine, but not glutamic or aspartic acids.. Presumably involved in the processing and regular turnover of intracellular proteins. Catalyzes the removal of unsubstituted N-terminal amino acids from various peptides. This chain is Probable cytosol aminopeptidase, found in Gloeobacter violaceus (strain ATCC 29082 / PCC 7421).